The chain runs to 509 residues: Histidine--tRNA ligase, cytoplasmic (509 aa).

Position 2 is an N-acetylalanine (Ala-2). The WHEP-TRS domain occupies 3–59; the sequence is DRAALEDLVRVQGERVRGLKQQKASAEQIEEEVAKLLKLKAQLGPDEGKPKFVLKTP. At Ser-66 the chain carries Phosphoserine. L-histidine is bound by residues 130 to 132, Arg-157, Gln-173, Asp-177, Arg-326, and 330 to 331; these read DLT and YY. Ser-356 carries the post-translational modification Phosphoserine.

The protein belongs to the class-II aminoacyl-tRNA synthetase family. As to quaternary structure, homodimer.

It is found in the cytoplasm. The enzyme catalyses tRNA(His) + L-histidine + ATP = L-histidyl-tRNA(His) + AMP + diphosphate + H(+). In terms of biological role, catalyzes the ATP-dependent ligation of histidine to the 3'-end of its cognate tRNA, via the formation of an aminoacyl-adenylate intermediate (His-AMP). Plays a role in axon guidance. The chain is Histidine--tRNA ligase, cytoplasmic (HARS1) from Bos taurus (Bovine).